The primary structure comprises 350 residues: NADH-quinone oxidoreductase subunit H (350 aa).

8 consecutive transmembrane segments (helical) span residues 31–51 (LMLLAVVGVLAFLFLNALFLI), 102–122 (LLAPVLIFTIPVMLFLVIPFG), 132–152 (LGVLYLVAITSVETIVLWMAG), 171–191 (MLSYEMPVILAMLSVVMMAGS), 205–225 (WFIFLQPVGFLIYFIAVNAEF), 263–283 (FMIGAIMVTTLFLGGWNAPFG), 286–306 (FIPSWLWFIIKMYFVITLYMW), and 322–342 (FAWKFLLPVSLANIFITGFGL).

The protein belongs to the complex I subunit 1 family. NDH-1 is composed of 14 different subunits. Subunits NuoA, H, J, K, L, M, N constitute the membrane sector of the complex.

It is found in the cell membrane. It carries out the reaction a quinone + NADH + 5 H(+)(in) = a quinol + NAD(+) + 4 H(+)(out). NDH-1 shuttles electrons from NADH, via FMN and iron-sulfur (Fe-S) centers, to quinones in the respiratory chain. The immediate electron acceptor for the enzyme in this species is believed to be ubiquinone. Couples the redox reaction to proton translocation (for every two electrons transferred, four hydrogen ions are translocated across the cytoplasmic membrane), and thus conserves the redox energy in a proton gradient. This subunit may bind ubiquinone. This chain is NADH-quinone oxidoreductase subunit H, found in Carboxydothermus hydrogenoformans (strain ATCC BAA-161 / DSM 6008 / Z-2901).